The primary structure comprises 303 residues: Probable RuBisCO transcriptional regulator (303 aa).

One can recognise an HTH lysR-type domain in the interval F6–T63. The H-T-H motif DNA-binding region spans F23–Q42.

This sequence belongs to the LysR transcriptional regulatory family.

The protein localises to the plastid. Its subcellular location is the chloroplast. Its function is as follows. Trans-acting transcriptional regulator of RuBisCO genes (rbcL and rbcS) expression. This Cyanidioschyzon merolae (strain NIES-3377 / 10D) (Unicellular red alga) protein is Probable RuBisCO transcriptional regulator (rbcR).